The following is a 292-amino-acid chain: Elongation factor Ts (292 aa).

The involved in Mg(2+) ion dislocation from EF-Tu stretch occupies residues 80 to 83 (TDSV).

It belongs to the EF-Ts family.

Its subcellular location is the cytoplasm. Associates with the EF-Tu.GDP complex and induces the exchange of GDP to GTP. It remains bound to the aminoacyl-tRNA.EF-Tu.GTP complex up to the GTP hydrolysis stage on the ribosome. In Lactiplantibacillus plantarum (strain ATCC BAA-793 / NCIMB 8826 / WCFS1) (Lactobacillus plantarum), this protein is Elongation factor Ts.